The chain runs to 248 residues: ATP synthase subunit a, chloroplastic (248 aa).

A run of 5 helical transmembrane segments spans residues 37–57, 96–116, 135–155, 200–220, and 221–241; these read GQVL…AFLG, VPFV…GALV, INTT…AGFH, LVVA…MMFL, and GLFT…AYIG.

This sequence belongs to the ATPase A chain family. As to quaternary structure, F-type ATPases have 2 components, CF(1) - the catalytic core - and CF(0) - the membrane proton channel. CF(1) has five subunits: alpha(3), beta(3), gamma(1), delta(1), epsilon(1). CF(0) has four main subunits: a, b, b' and c.

It is found in the plastid. The protein resides in the chloroplast thylakoid membrane. Key component of the proton channel; it plays a direct role in the translocation of protons across the membrane. The polypeptide is ATP synthase subunit a, chloroplastic (Staurastrum punctulatum (Green alga)).